The primary structure comprises 1129 residues: Phytochrome A type 3 (1129 aa).

Residues 1 to 21 (MSSSRPASSSSSRNRQSSQAR) show a composition bias toward low complexity. The segment at 1 to 24 (MSSSRPASSSSSRNRQSSQARVLA) is disordered. In terms of domain architecture, GAF spans 217–402 (SMEVLCNTVV…VFAVHVNREF (186 aa)). Cysteine 322 lines the phytochromobilin pocket. PAS domains follow at residues 618–688 (VTSE…LQGK) and 748–822 (VEGD…VSLC). The Histidine kinase domain maps to 902 to 1122 (YMRHAINNPL…TFIITAELAS (221 aa)).

It belongs to the phytochrome family. In terms of assembly, homodimer. Contains one covalently linked phytochromobilin chromophore.

Functionally, regulatory photoreceptor which exists in two forms that are reversibly interconvertible by light: the Pr form that absorbs maximally in the red region of the spectrum and the Pfr form that absorbs maximally in the far-red region. Photoconversion of Pr to Pfr induces an array of morphogenic responses, whereas reconversion of Pfr to Pr cancels the induction of those responses. Pfr controls the expression of a number of nuclear genes including those encoding the small subunit of ribulose-bisphosphate carboxylase, chlorophyll A/B binding protein, protochlorophyllide reductase, rRNA, etc. It also controls the expression of its own gene(s) in a negative feedback fashion. The chain is Phytochrome A type 3 (PHYA3) from Avena sativa (Oat).